The sequence spans 178 residues: Caveolin-1 (178 aa).

N-acetylserine is present on Ser-2. Position 2 is a phosphoserine (Ser-2). Positions 2–94 are required for homooligomerization; sequence SGGKYVDSEG…WKASFTTFTV (93 aa). Topologically, residues 2–104 are cytoplasmic; sequence SGGKYVDSEG…TKYWFYRLLS (103 aa). An N6-acetyllysine; alternate modification is found at Lys-5. A Glycyl lysine isopeptide (Lys-Gly) (interchain with G-Cter in ubiquitin); alternate cross-link involves residue Lys-5. Position 6 is a phosphotyrosine (Tyr-6). At Ser-9 the chain carries Phosphoserine. The residue at position 14 (Tyr-14) is a Phosphotyrosine; by ABL1. Tyr-25 bears the Phosphotyrosine mark. Glycyl lysine isopeptide (Lys-Gly) (interchain with G-Cter in ubiquitin) cross-links involve residues Lys-26, Lys-30, Lys-39, Lys-47, and Lys-57. The tract at residues 82–94 is interaction with CAVIN3; that stretch reads DGIWKASFTTFTV. An intramembrane region (helical) is located at residues 105 to 125; the sequence is ALFGIPMALIWGIYFAILSFL. The Cytoplasmic segment spans residues 126-178; it reads HIWAVVPCIKSFLIEIQCVSRVYSIYVHTFCDPFFEAVGKIFSSIRINMQKEI. Positions 131-142 are interacts with SPRY1, SPRY2, SPRY3 and SPRY4; it reads VPCIKSFLIEIQ. S-palmitoyl cysteine attachment occurs at residues Cys-133, Cys-143, and Cys-156. The interval 149-160 is interacts with SPRY1, SPRY2, and SPRY4; the sequence is SIYVHTFCDPFF. The tract at residues 167 to 178 is interacts with SPRY1, SPRY2, SPRY3 and SPRY4; it reads FSSIRINMQKEI.

Belongs to the caveolin family. As to quaternary structure, homooligomer. Interacts with GLIPR2. Interacts with NOSTRIN. Interacts with SNAP25 and STX1A. Interacts (via the N-terminus) with DPP4; the interaction is direct. Interacts with CTNNB1, CDH1 and JUP. Interacts with PACSIN2; this interaction induces membrane tubulation. Interacts with SLC7A9. Interacts with BMX and BTK. Interacts with TGFBR1. Interacts with CAVIN3 (via leucine-zipper domain) in a cholesterol-sensitive manner. Interacts with CAVIN1. Interacts with EHD2 in a cholesterol-dependent manner. Forms a ternary complex with UBXN6 and VCP; mediates CAV1 targeting to lysosomes for degradation. Interacts with ABCG1; this interaction regulates ABCG1-mediated cholesterol efflux. Interacts with NEU3; this interaction enhances NEU3 sialidase activity within caveola. Interacts (via C-terminus) with SPRY1, SPRY2 (via C-terminus), SPRY3, and SPRY4. Interacts with IGFBP5; this interaction allows trafficking of IGFBP5 from the plasma membrane to the nucleus. Post-translationally, phosphorylated at Tyr-14 by ABL1 in response to oxidative stress. In terms of processing, ubiquitinated. Undergo monoubiquitination and multi- and/or polyubiquitination. Monoubiquitination of N-terminal lysines promotes integration in a ternary complex with UBXN6 and VCP which promotes oligomeric CAV1 targeting to lysosomes for degradation. Ubiquitinated by ZNRF1; leading to degradation and modulation of the TLR4-mediated immune response.

It localises to the golgi apparatus membrane. Its subcellular location is the cell membrane. It is found in the membrane. The protein resides in the caveola. The protein localises to the membrane raft. In terms of biological role, may act as a scaffolding protein within caveolar membranes. Forms a stable heterooligomeric complex with CAV2 that targets to lipid rafts and drives caveolae formation. Mediates the recruitment of CAVIN proteins (CAVIN1/2/3/4) to the caveolae. Interacts directly with G-protein alpha subunits and can functionally regulate their activity. Involved in the costimulatory signal essential for T-cell receptor (TCR)-mediated T-cell activation. Its binding to DPP4 induces T-cell proliferation and NF-kappa-B activation in a T-cell receptor/CD3-dependent manner. Recruits CTNNB1 to caveolar membranes and may regulate CTNNB1-mediated signaling through the Wnt pathway. Negatively regulates TGFB1-mediated activation of SMAD2/3 by mediating the internalization of TGFBR1 from membrane rafts leading to its subsequent degradation. Binds 20(S)-hydroxycholesterol (20(S)-OHC). This Mustela putorius furo (European domestic ferret) protein is Caveolin-1 (CAV1).